The following is a 263-amino-acid chain: Phosphatidylglycerol--prolipoprotein diacylglyceryl transferase (263 aa).

4 helical membrane passes run 7-27 (IFSI…LGIV), 50-70 (LLTA…VLIY), 85-105 (TWKG…AVII), and 112-132 (IPIF…LFLG). Arg-133 lines the a 1,2-diacyl-sn-glycero-3-phospho-(1'-sn-glycerol) pocket. Helical transmembrane passes span 169–189 (LYEA…LFFL), 197–217 (GTLT…VEFF), and 233–253 (MGQL…LSAL).

This sequence belongs to the Lgt family.

It localises to the cell membrane. It carries out the reaction L-cysteinyl-[prolipoprotein] + a 1,2-diacyl-sn-glycero-3-phospho-(1'-sn-glycerol) = an S-1,2-diacyl-sn-glyceryl-L-cysteinyl-[prolipoprotein] + sn-glycerol 1-phosphate + H(+). It functions in the pathway protein modification; lipoprotein biosynthesis (diacylglyceryl transfer). Its function is as follows. Catalyzes the transfer of the diacylglyceryl group from phosphatidylglycerol to the sulfhydryl group of the N-terminal cysteine of a prolipoprotein, the first step in the formation of mature lipoproteins. The sequence is that of Phosphatidylglycerol--prolipoprotein diacylglyceryl transferase from Wolbachia sp. subsp. Brugia malayi (strain TRS).